A 121-amino-acid chain; its full sequence is Large ribosomal subunit protein bL21 (121 aa).

Belongs to the bacterial ribosomal protein bL21 family. Part of the 50S ribosomal subunit. Contacts protein L20.

This protein binds to 23S rRNA in the presence of protein L20. In Synechococcus sp. (strain CC9605), this protein is Large ribosomal subunit protein bL21.